We begin with the raw amino-acid sequence, 394 residues long: ATP-dependent RNA helicase fal1 (394 aa).

Residues 21–49 carry the Q motif motif; sequence SSFEEMNLKEDLLRGIYAYGYETPSAVQS. The 171-residue stretch at 52-222 folds into the Helicase ATP-binding domain; the sequence is IIQICKGRDV…NKFTTNPVRI (171 aa). 65-72 contributes to the ATP binding site; the sequence is AQSGTGKT. Residue serine 67 is modified to Phosphoserine. The short motif at 170–173 is the DEAD box element; the sequence is DEAD. The region spanning 233–394 is the Helicase C-terminal domain; that stretch reads GLKQYFIAVE…EMPMNIGDMV (162 aa).

Belongs to the DEAD box helicase family. DDX48/FAL1 subfamily.

Its subcellular location is the nucleus. The protein localises to the nucleolus. The catalysed reaction is ATP + H2O = ADP + phosphate + H(+). In terms of biological role, ATP-dependent RNA helicase involved in 40S ribosomal subunit biogenesis. Required for the processing and cleavage of 35S pre-rRNA at sites A0, A1, and A2, leading to mature 18S rRNA. This is ATP-dependent RNA helicase fal1 (tif412) from Schizosaccharomyces pombe (strain 972 / ATCC 24843) (Fission yeast).